Here is a 217-residue protein sequence, read N- to C-terminus: Probable transaldolase (217 aa).

Lys83 (schiff-base intermediate with substrate) is an active-site residue.

Belongs to the transaldolase family. Type 3B subfamily.

It is found in the cytoplasm. It carries out the reaction D-sedoheptulose 7-phosphate + D-glyceraldehyde 3-phosphate = D-erythrose 4-phosphate + beta-D-fructose 6-phosphate. It participates in carbohydrate degradation; pentose phosphate pathway; D-glyceraldehyde 3-phosphate and beta-D-fructose 6-phosphate from D-ribose 5-phosphate and D-xylulose 5-phosphate (non-oxidative stage): step 2/3. In terms of biological role, transaldolase is important for the balance of metabolites in the pentose-phosphate pathway. The polypeptide is Probable transaldolase (Clostridium botulinum (strain Loch Maree / Type A3)).